The sequence spans 246 residues: Thaumatin-like protein 1a (246 aa).

The N-terminal stretch at 1 to 24 (MMKSQVASLLGLTLAILFFSGAHA) is a signal peptide. Intrachain disulfides connect cysteine 33–cysteine 245, cysteine 81–cysteine 91, cysteine 96–cysteine 103, cysteine 151–cysteine 234, cysteine 156–cysteine 217, cysteine 164–cysteine 180, cysteine 184–cysteine 193, and cysteine 194–cysteine 204.

The protein belongs to the thaumatin family.

It is found in the secreted. This is Thaumatin-like protein 1a (TL1) from Malus domestica (Apple).